Reading from the N-terminus, the 867-residue chain is Alanine--tRNA ligase (867 aa).

Positions 556, 560, 658, and 662 each coordinate Zn(2+).

It belongs to the class-II aminoacyl-tRNA synthetase family. Zn(2+) is required as a cofactor.

The protein localises to the cytoplasm. The catalysed reaction is tRNA(Ala) + L-alanine + ATP = L-alanyl-tRNA(Ala) + AMP + diphosphate. Catalyzes the attachment of alanine to tRNA(Ala) in a two-step reaction: alanine is first activated by ATP to form Ala-AMP and then transferred to the acceptor end of tRNA(Ala). Also edits incorrectly charged Ser-tRNA(Ala) and Gly-tRNA(Ala) via its editing domain. This Fusobacterium nucleatum subsp. nucleatum (strain ATCC 25586 / DSM 15643 / BCRC 10681 / CIP 101130 / JCM 8532 / KCTC 2640 / LMG 13131 / VPI 4355) protein is Alanine--tRNA ligase.